Here is a 310-residue protein sequence, read N- to C-terminus: p-hydroxybenzoic acid efflux pump subunit AaeA (310 aa).

The chain crosses the membrane as a helical span at residues 12 to 32 (AITVVLVVLAFIAIFRAWSFY).

This sequence belongs to the membrane fusion protein (MFP) (TC 8.A.1) family.

Its subcellular location is the cell inner membrane. Forms an efflux pump with AaeB. This is p-hydroxybenzoic acid efflux pump subunit AaeA from Cronobacter sakazakii (strain ATCC BAA-894) (Enterobacter sakazakii).